Here is a 491-residue protein sequence, read N- to C-terminus: Lysosomal Pro-X carboxypeptidase (491 aa).

The signal sequence occupies residues 1–17; that stretch reads MGCRALLLLSFLLLGAA. Positions 18 to 43 are excised as a propeptide; it reads TTIPPRLKTLGSPHLSASPTPDPAVA. N99 carries an N-linked (GlcNAc...) asparagine glycan. The active-site Charge relay system is S177. Residues 192 to 332 are SKS domain; the sequence is HIVVGALAAS…QNIFQALSVY (141 aa). Disulfide bonds link C213–C370, C231–C308, C262–C341, and C362–C392. N-linked (GlcNAc...) asparagine glycans are attached at residues N315, N334, and N343. Residue N413 is glycosylated (N-linked (GlcNAc...) asparagine). Active-site charge relay system residues include D428 and H453.

It belongs to the peptidase S28 family. In terms of assembly, homodimer.

The protein localises to the lysosome. The enzyme catalyses Cleavage of a -Pro-|-Xaa bond to release a C-terminal amino acid.. Its function is as follows. Cleaves C-terminal amino acids linked to proline in peptides such as angiotensin II, III and des-Arg9-bradykinin. This cleavage occurs at acidic pH, but enzymatic activity is retained with some substrates at neutral pH. The protein is Lysosomal Pro-X carboxypeptidase (Prcp) of Mus musculus (Mouse).